Consider the following 321-residue polypeptide: MTKYALVGDVGGTNARLALCDIASGEISQAKTYSGLDYPSLEAVIRVYLEEHKVEVKDGCIAIACPITGDWVAMTNHTWAFSIAEMKKNLGFSHLEIINDFTAVSMAIPMLKKEHLIQFGGAEPVEGKPIAVYGAGTGLGVAHLVHVDKRWVSLPGEGGHVDFAPNSEEEAIILEILRAEIGHVSAERVLSGPGLVNLYRAIVKADNRLPENLKPKDITERALADSCTDCRRALSLFCVIMGRFGGNLALTLGTFGGVYIAGGIVPRFLEFFKASGFRAAFEDKGRFKEYVHDIPVYLIVHDNPGLLGSGAHLRQTLGHIL.

8–13 (GDVGGT) provides a ligand contact to ATP.

Belongs to the bacterial glucokinase family.

It is found in the cytoplasm. It catalyses the reaction D-glucose + ATP = D-glucose 6-phosphate + ADP + H(+). This is Glucokinase from Shigella sonnei (strain Ss046).